A 254-amino-acid chain; its full sequence is Very-long-chain (3R)-3-hydroxyacyl-CoA dehydratase 2 (254 aa).

Residues 1–10 are compositionally biased toward low complexity; that stretch reads MAAAAATAAT. The tract at residues 1 to 34 is disordered; that stretch reads MAAAAATAATKGNGGGSGRVGAGDSSGARKKKGP. Alanine 2 bears the N-acetylalanine mark. The Cytoplasmic segment spans residues 2–41; it reads AAAAATAATKGNGGGSGRVGAGDSSGARKKKGPGPVATAY. The segment covering 12–21 has biased composition (gly residues); the sequence is GNGGGSGRVG. A helical transmembrane segment spans residues 42–60; sequence LVIYNVVMTAGWLVIAVGL. Topologically, residues 61-79 are lumenal; sequence VRAYLAKGSYHSLYYSIER. A helical transmembrane segment spans residues 80–97; sequence PLKFFQTGALLEILHCAI. Residues 98-107 lie on the Cytoplasmic side of the membrane; sequence GIVPSSVVLT. A helical transmembrane segment spans residues 108-125; sequence SFQVMSRVFLIWAVTHSV. Residues 126–130 lie on the Lumenal side of the membrane; it reads KEVQS. Residues 131-146 traverse the membrane as a helical segment; that stretch reads EDSVLLFVIAWTITEI. Residues 147–169 are Cytoplasmic-facing; sequence IRYSFYTFSLLNHLPYIIKWARY. Residues 170–187 form a helical membrane-spanning segment; that stretch reads TLFIVLYPMGVTGELLTI. Residues tyrosine 176 and glutamate 183 contribute to the active site. Topologically, residues 188–217 are lumenal; that stretch reads YAALPFVRQAGLYSISLPNKYNFSFDYHAF. The interval 198-214 is may be involved in interaction with TECR; sequence GLYSISLPNKYNFSFDY. N-linked (GlcNAc...) asparagine glycosylation is present at asparagine 209. Residues 218–235 traverse the membrane as a helical segment; sequence LILIMISYIPLFPQLYFH. At 236-254 the chain is on the cytoplasmic side; sequence MIHQRRKVLSHTEEHKKFE.

Belongs to the very long-chain fatty acids dehydratase HACD family. In terms of assembly, may interact with enzymes of the ELO family (including ELOVL1); with those enzymes that mediate condensation, the first of the four steps of the reaction cycle responsible for fatty acids elongation, may be part of a larger fatty acids elongase complex. Interacts with BCAP31. Interacts with TECR.

Its subcellular location is the endoplasmic reticulum membrane. The catalysed reaction is a very-long-chain (3R)-3-hydroxyacyl-CoA = a very-long-chain (2E)-enoyl-CoA + H2O. It carries out the reaction (3R)-hydroxyhexadecanoyl-CoA = (2E)-hexadecenoyl-CoA + H2O. It catalyses the reaction (3R)-hydroxyoctadecanoyl-CoA = (2E)-octadecenoyl-CoA + H2O. The enzyme catalyses (3R)-hydroxyeicosanoyl-CoA = (2E)-eicosenoyl-CoA + H2O. The catalysed reaction is (3R)-hydroxydocosanoyl-CoA = (2E)-docosenoyl-CoA + H2O. It carries out the reaction (3R)-hydroxytetracosanoyl-CoA = (2E)-tetracosenoyl-CoA + H2O. It catalyses the reaction (3R)-hydroxyhexacosanoyl-CoA = (2E)-hexacosenoyl-CoA + H2O. It functions in the pathway lipid metabolism; fatty acid biosynthesis. Functionally, catalyzes the third of the very long-chain fatty acids (VLCFA) elongation four-step cycle (condensation, reduction, dehydration, and reduction). This endoplasmic reticulum-elongation process is characterized by the addition of two carbons to the lipid chain through each cycle. This enzyme catalyzes the dehydration of the 3-hydroxyacyl-CoA intermediate into trans-2,3-enoyl-CoA, within each cycle of elongation. Therefore, it participates in the production of various VLCFAs involved in multiple biological processes as precursors of membrane lipids and lipid mediators. The polypeptide is Very-long-chain (3R)-3-hydroxyacyl-CoA dehydratase 2 (Mus musculus (Mouse)).